The primary structure comprises 208 residues: UPF0637 protein BcerKBAB4_3786 (208 aa).

This sequence belongs to the UPF0637 family.

This is UPF0637 protein BcerKBAB4_3786 from Bacillus mycoides (strain KBAB4) (Bacillus weihenstephanensis).